A 354-amino-acid polypeptide reads, in one-letter code: Zinc finger protein 346 (354 aa).

4 consecutive Matrin-type zinc fingers follow at residues Thr-34–Arg-64, Lys-95–Leu-125, Lys-165–Lys-195, and Phe-232–Ser-262. Residues Cys-36, Cys-39, His-52, His-58, Cys-97, Cys-100, His-113, and His-119 each coordinate Zn(2+). Residues Met-263 to Gly-343 are disordered. Composition is skewed to low complexity over residues Gly-270–Ala-289 and Gly-310–Leu-323. Positions Met-324–Ser-333 are enriched in pro residues.

Its subcellular location is the nucleus. It is found in the cytoplasm. Binds preferentially to dsRNA, but also to RNA-DNA hybrids. In Xenopus tropicalis (Western clawed frog), this protein is Zinc finger protein 346.